A 918-amino-acid chain; its full sequence is Chitin synthase C (918 aa).

The tract at residues 1–63 (MSYNRLGDPY…EMPSSDRLAE (63 aa)) is disordered. Residues 22 to 37 (NPSSLSNRSPSPGRPL) are compositionally biased toward low complexity. 4 helical membrane passes run 562 to 581 (WLNG…YQLW), 605 to 625 (LFAW…TTYL), 637 to 657 (VLGV…FVLS), and 672 to 692 (MVYL…FVTV). Asparagine 712 carries N-linked (GlcNAc...) asparagine glycosylation. A run of 3 helical transmembrane segments spans residues 715–735 (FFSI…ASII), 845–865 (VVLV…SSAG), and 890–910 (VVLW…MWFL).

It belongs to the chitin synthase family. Class I subfamily. In terms of tissue distribution, mainly expressed in hyphae and conidiphores. Relatively strongly expressed in young cleistothecia and in mature ascospores, but negligible in Huelle cells.

Its subcellular location is the cell membrane. The protein resides in the cell septum. It localises to the cell tip. It carries out the reaction [(1-&gt;4)-N-acetyl-beta-D-glucosaminyl](n) + UDP-N-acetyl-alpha-D-glucosamine = [(1-&gt;4)-N-acetyl-beta-D-glucosaminyl](n+1) + UDP + H(+). Functionally, polymerizes chitin, a structural polymer of the cell wall and septum, by transferring the sugar moiety of UDP-GlcNAc to the non-reducing end of the growing chitin polymer. ChsC and chsA share critical functions in hyphal wall integrity and differentiation. ChsA and chsC share also overlapping roles in septum formation. The sequence is that of Chitin synthase C from Emericella nidulans (strain FGSC A4 / ATCC 38163 / CBS 112.46 / NRRL 194 / M139) (Aspergillus nidulans).